Consider the following 538-residue polypeptide: Thiamine transport system permease protein ThiP (538 aa).

The next 12 helical transmembrane spans lie at 19 to 39, 57 to 77, 97 to 117, 141 to 161, 202 to 222, 242 to 262, 293 to 313, 337 to 357, 376 to 396, 406 to 426, 466 to 486, and 509 to 529; these read VVVISFIILFYGGALSSIFAL, LILFSFGQALLSTVLSIFFGL, LMSLTFVLPALVVIFGLIGIY, LSGILIAHLFFNIPLAAQLFL, FSLIFMLCFTSFTVVLTLGGG, LPKAALFAMLQFVFCLILFSL, ILVLLVFVFFLFSPVLNILIS, LSIAPLSALLALTMAIALLLL, AGMVILAIPILVLAMGLFLLL, LFIIVVFCNALSAMPFVLRIL, YAFALGLALSLGDFTAIALFG, and AAVTAGILLLLCGILFAFIHT. Residues 58–263 form the ABC transmembrane type-1 1 domain; that stretch reads ILFSFGQALL…VFCLILFSLT (206 aa). An ABC transmembrane type-1 2 domain is found at 333 to 528; it reads LGYSLSIAPL…LCGILFAFIH (196 aa).

This sequence belongs to the binding-protein-dependent transport system permease family. CysTW subfamily. The complex is composed of two ATP-binding proteins (ThiQ), two transmembrane proteins (ThiP) and a solute-binding protein (ThiB).

The protein localises to the cell inner membrane. Functionally, part of the ABC transporter complex ThiBPQ involved in thiamine import. Probably responsible for the translocation of the substrate across the membrane. In Haemophilus influenzae (strain ATCC 51907 / DSM 11121 / KW20 / Rd), this protein is Thiamine transport system permease protein ThiP (thiP).